The sequence spans 1081 residues: Probable cellulose synthase A catalytic subunit 8 [UDP-forming] (1081 aa).

Residues Met1–Met277 are Cytoplasmic-facing. Residues Cys19, Cys22, Cys38, Cys41, Cys46, Cys49, Cys61, and Cys64 each coordinate Zn(2+). The RING-type; degenerate zinc-finger motif lies at Cys19 to Lys65. The interval Lys72 to Tyr148 is disordered. Over residues Glu81–Ser91 the composition is skewed to acidic residues. The segment covering Gln103–Arg112 has biased composition (basic and acidic residues). The chain crosses the membrane as a helical span at residues Val278 to Val298. The Extracellular segment spans residues Arg299–Asn300. Residues Ala301–Leu321 traverse the membrane as a helical segment. Residues Asp322–Ser864 lie on the Cytoplasmic side of the membrane. The UDP-alpha-D-glucose site is built by Ser360, Lys366, Glu367, and Asp396. The active site involves Asp396. The stretch at Val450 to Val477 forms a coiled coil. Lys537 lines the UDP-alpha-D-glucose pocket. Mn(2+) is bound by residues Lys538 and Asp562. A disordered region spans residues Ser660–His684. Residues Gly664–Asn682 are compositionally biased toward basic residues. Asp781 is an active-site residue. The chain crosses the membrane as a helical span at residues Ile865–Ile885. Residues Pro886–Asn890 are Extracellular-facing. A helical membrane pass occupies residues Phe891 to Met911. At Arg912–Gln926 the chain is on the cytoplasmic side. A helical membrane pass occupies residues Phe927–Val947. Residues Leu948–Thr977 are Extracellular-facing. An N-linked (GlcNAc...) asparagine glycan is attached at Asn954. A helical transmembrane segment spans residues Thr978–Ile998. Topologically, residues Ser999–Trp1009 are cytoplasmic. Residues Gly1010–Leu1030 traverse the membrane as a helical segment. The Extracellular portion of the chain corresponds to Lys1031–Arg1039. A helical transmembrane segment spans residues Thr1040 to Val1060. Residues Arg1061–Cys1081 lie on the Cytoplasmic side of the membrane.

It belongs to the glycosyltransferase 2 family. Plant cellulose synthase subfamily. The cofactor is Mn(2+). Requires Zn(2+) as cofactor.

It localises to the cell membrane. The enzyme catalyses [(1-&gt;4)-beta-D-glucosyl](n) + UDP-alpha-D-glucose = [(1-&gt;4)-beta-D-glucosyl](n+1) + UDP + H(+). It participates in glycan metabolism; plant cellulose biosynthesis. Functionally, probable catalytic subunit of cellulose synthase terminal complexes ('rosettes'), required for beta-1,4-glucan microfibril crystallization, a major mechanism of the cell wall formation. The polypeptide is Probable cellulose synthase A catalytic subunit 8 [UDP-forming] (CESA8) (Oryza sativa subsp. japonica (Rice)).